Consider the following 49-residue polypeptide: Large ribosomal subunit protein bL33C (49 aa).

Belongs to the bacterial ribosomal protein bL33 family.

This Lactococcus lactis subsp. cremoris (strain MG1363) protein is Large ribosomal subunit protein bL33C.